The sequence spans 283 residues: Interferon alpha-inducible protein 27-like protein 2B (283 aa).

The N-terminal 90 residues, 1–90 (MKRKFVGAAI…AVGTATGARA (90 aa)), are a transit peptide targeting the mitochondrion. The tract at residues 90-120 (AEGSMGASREQESGPQDPPQELQEPQEPPSC) is disordered. The next 3 helical transmembrane spans lie at 130–150 (FVGAAIGGALAVAGAPIALSA), 176–196 (GGGIAAGGLVATLQSVGILGL), and 202–222 (IILGAVGAATGATAAGAMGAC). Positions 227–283 (PGLQDLQQEPKEPQEPQELQKQQEPQEPQELQKQQETQETQETQELQKTQEPPSYEK) are disordered. The segment covering 242 to 283 (PQELQKQQEPQEPQELQKQQETQETQETQELQKTQEPPSYEK) has biased composition (low complexity).

This sequence belongs to the IFI6/IFI27 family. Homooligomer. Interacts with BAK1. Interacts with BAX. Interacts with adenine nucleotide translocase.

It is found in the mitochondrion inner membrane. Functionally, functions in the intrinsic apoptotic signaling pathway and may have an interferon-induced antiviral activity. This Mus musculus (Mouse) protein is Interferon alpha-inducible protein 27-like protein 2B.